The primary structure comprises 543 residues: Protein DETOXIFICATION 47, chloroplastic (543 aa).

The transit peptide at 1–30 directs the protein to the chloroplast; it reads MLIKSQRLTLFSPLLSKTRRIPVNSHQTLV. A coiled-coil region spans residues 55–94; the sequence is VIRRRIKLERVTRNCVRIDREIDEEEEEEEKERGDLVKQS. Helical transmembrane passes span 107 to 127, 135 to 155, 181 to 201, 228 to 248, 256 to 276, 278 to 298, 319 to 339, 342 to 362, 406 to 426, 443 to 463, 472 to 492, and 497 to 517; these read GPAMGMWICGPLMSLIDTVVI, LAALGPGTVLCDHMSYVFMFL, VLLFIGLVCGLMMLLLTRLFG, GLAWPFILVGLVAQSASLGMK, ALAAATIINGLGDTILCLFLG, GIAGAAWATTASQIVSAYMMM, LWKISALAAPVFISIFSKIAF, FIIYCATSMGTHVLAAHQVMA, IIGATLGLVLGVIGTAVPGLF, LLIPFFMALSALPMTVSLEGT, FVSSVMSSSFIIGCLTLMFVT, and GLLGCWFVLVGFQWGRFGLYL.

The protein belongs to the multi antimicrobial extrusion (MATE) (TC 2.A.66.1) family. In terms of tissue distribution, preferentially expressed in the epidermal cells.

It is found in the plastid. The protein resides in the chloroplast membrane. Its function is as follows. Functions as a multidrug and toxin extrusion transporter in the export of salicylic acid (SA) from the chloroplast to the cytoplasm. Plays an essential function in plant defense via the pathogen-induced salicylic acid (SA) accumulation. Also acts as a key component of the Age-related resistance (ARR) pathway. The protein is Protein DETOXIFICATION 47, chloroplastic of Arabidopsis thaliana (Mouse-ear cress).